The primary structure comprises 259 residues: Thiazole synthase (259 aa).

Lys-95 (schiff-base intermediate with DXP) is an active-site residue. 1-deoxy-D-xylulose 5-phosphate-binding positions include Gly-156, 182–183 (AG), and 204–205 (AS).

It belongs to the ThiG family. In terms of assembly, homotetramer. Forms heterodimers with either ThiH or ThiS.

The protein resides in the cytoplasm. It carries out the reaction [ThiS sulfur-carrier protein]-C-terminal-Gly-aminoethanethioate + 2-iminoacetate + 1-deoxy-D-xylulose 5-phosphate = [ThiS sulfur-carrier protein]-C-terminal Gly-Gly + 2-[(2R,5Z)-2-carboxy-4-methylthiazol-5(2H)-ylidene]ethyl phosphate + 2 H2O + H(+). It participates in cofactor biosynthesis; thiamine diphosphate biosynthesis. In terms of biological role, catalyzes the rearrangement of 1-deoxy-D-xylulose 5-phosphate (DXP) to produce the thiazole phosphate moiety of thiamine. Sulfur is provided by the thiocarboxylate moiety of the carrier protein ThiS. In vitro, sulfur can be provided by H(2)S. The protein is Thiazole synthase of Corynebacterium efficiens (strain DSM 44549 / YS-314 / AJ 12310 / JCM 11189 / NBRC 100395).